The following is a 393-amino-acid chain: MTIRNQRFSLLKQPISSTLNQHLVDYPTPSNLSYWWGFGSLAGICLVIQIVTGVFLAMHYTPHVDLAFNSVEHIMRDVEGGWLLRYMHANGASMFFIVVYLHIFRGLYYASYSSPREFVWCLGVVIFLLMIVTAFIGYVLPWGQMSFWGATVITSLASAIPVVGDTIVTWLWGGFSVDNATLNRFFSLHYLLPFILVGASLLHLAALHQYGSNNPLGVHSEMDKIAFYPYFYVKDLVGWVAFAIFFSIWIFYAPNVLGHPDNYIPANPMSTPPHIVPEWYFLPIYAILRSIPDKAGGVAAIALVFICLLALPFFKSMYVRSSSFRPIYQGMFWLLLADCLLLGWIGCQPVEAPFVTIGQISSLVFFLFFAITPILGRVGRGIPNSYTDETDHT.

Residues 1–33 are Mitochondrial matrix-facing; it reads MTIRNQRFSLLKQPISSTLNQHLVDYPTPSNLS. Residues 34 to 57 traverse the membrane as a helical segment; sequence YWWGFGSLAGICLVIQIVTGVFLA. The Mitochondrial intermembrane portion of the chain corresponds to 58-80; the sequence is MHYTPHVDLAFNSVEHIMRDVEG. A helical transmembrane segment spans residues 81–108; the sequence is GWLLRYMHANGASMFFIVVYLHIFRGLY. Heme b-binding residues include His-88 and His-102. Topologically, residues 109-116 are mitochondrial matrix; it reads YASYSSPR. The helical transmembrane segment at 117–141 threads the bilayer; the sequence is EFVWCLGVVIFLLMIVTAFIGYVLP. At 142–178 the chain is on the mitochondrial intermembrane side; it reads WGQMSFWGATVITSLASAIPVVGDTIVTWLWGGFSVD. Residues 179–210 form a helical membrane-spanning segment; that stretch reads NATLNRFFSLHYLLPFILVGASLLHLAALHQY. Heme b contacts are provided by His-189 and His-203. A ubiquinone is bound at residue His-208. Residues 211–229 are Mitochondrial matrix-facing; the sequence is GSNNPLGVHSEMDKIAFYP. A helical transmembrane segment spans residues 230 to 252; the sequence is YFYVKDLVGWVAFAIFFSIWIFY. Residues 253-293 lie on the Mitochondrial intermembrane side of the membrane; sequence APNVLGHPDNYIPANPMSTPPHIVPEWYFLPIYAILRSIPD. A helical transmembrane segment spans residues 294 to 314; sequence KAGGVAAIALVFICLLALPFF. The Mitochondrial matrix portion of the chain corresponds to 315–325; that stretch reads KSMYVRSSSFR. Residues 326 to 346 form a helical membrane-spanning segment; the sequence is PIYQGMFWLLLADCLLLGWIG. Topologically, residues 347–353 are mitochondrial intermembrane; sequence CQPVEAP. The chain crosses the membrane as a helical span at residues 354–370; sequence FVTIGQISSLVFFLFFA. The Mitochondrial matrix portion of the chain corresponds to 371–393; sequence ITPILGRVGRGIPNSYTDETDHT.

The protein belongs to the cytochrome b family. As to quaternary structure, component of the ubiquinol-cytochrome c oxidoreductase (cytochrome b-c1 complex, complex III, CIII), a multisubunit enzyme composed of 10 subunits. The complex is composed of 3 respiratory subunits cytochrome b (MT-CYB), cytochrome c1 (CYC1-1 or CYC1-2) and Rieske protein (UCR1-1 or UCR1-2), 2 core protein subunits MPPalpha1 (or MPPalpha2) and MPPB, and 5 low-molecular weight protein subunits QCR7-1 (or QCR7-2), UCRQ-1 (or UCRQ-2), QCR9, UCRY and probably QCR6-1 (or QCR6-2). The complex exists as an obligatory dimer and forms supercomplexes (SCs) in the inner mitochondrial membrane with NADH-ubiquinone oxidoreductase (complex I, CI), resulting in different assemblies (supercomplexes SCI(1)III(2) and SCI(2)III(4)). The cofactor is heme b.

The protein localises to the mitochondrion inner membrane. Component of the ubiquinol-cytochrome c oxidoreductase, a multisubunit transmembrane complex that is part of the mitochondrial electron transport chain which drives oxidative phosphorylation. The respiratory chain contains 3 multisubunit complexes succinate dehydrogenase (complex II, CII), ubiquinol-cytochrome c oxidoreductase (cytochrome b-c1 complex, complex III, CIII) and cytochrome c oxidase (complex IV, CIV), that cooperate to transfer electrons derived from NADH and succinate to molecular oxygen, creating an electrochemical gradient over the inner membrane that drives transmembrane transport and the ATP synthase. The cytochrome b-c1 complex catalyzes electron transfer from ubiquinol to cytochrome c, linking this redox reaction to translocation of protons across the mitochondrial inner membrane, with protons being carried across the membrane as hydrogens on the quinol. In the process called Q cycle, 2 protons are consumed from the matrix, 4 protons are released into the intermembrane space and 2 electrons are passed to cytochrome c. Cytochrome b is a catalytic core subunit containing 2 b-type hemes BL and BH topographically segregated in the quinone reduction (Qi) and quinol oxidation (Q0) sites on opposite sides of the membrane. This Arabidopsis thaliana (Mouse-ear cress) protein is Cytochrome b (MT-CYB).